The chain runs to 554 residues: Probable pectinesterase/pectinesterase inhibitor 6 (554 aa).

The first 32 residues, 1–32 (MDHKILLTPPKSLYTKCIITIIYVVSISHLNA), serve as a signal peptide directing secretion. The segment at 29-183 (HLNAHFITSC…TKSISNSLAV (155 aa)) is pectinesterase inhibitor 6. N-linked (GlcNAc...) asparagine glycans are attached at residues asparagine 119 and asparagine 172. A pectinesterase 6 region spans residues 250–540 (DLVVAKDGSG…FTVENFLDGN (291 aa)). Residues threonine 327 and glutamine 357 each contribute to the substrate site. The active-site Proton donor; for pectinesterase activity is aspartate 380. A disulfide bond links cysteine 394 and cysteine 414. Residue aspartate 401 is the Nucleophile; for pectinesterase activity of the active site. Substrate is bound by residues arginine 460 and tryptophan 462.

This sequence in the N-terminal section; belongs to the PMEI family. It in the C-terminal section; belongs to the pectinesterase family. In terms of tissue distribution, expressed in rosette leaves, flower and siliques.

The protein localises to the secreted. It is found in the cell wall. The catalysed reaction is [(1-&gt;4)-alpha-D-galacturonosyl methyl ester](n) + n H2O = [(1-&gt;4)-alpha-D-galacturonosyl](n) + n methanol + n H(+). Its pathway is glycan metabolism; pectin degradation; 2-dehydro-3-deoxy-D-gluconate from pectin: step 1/5. Functionally, acts in the modification of cell walls via demethylesterification of cell wall pectin. This Arabidopsis thaliana (Mouse-ear cress) protein is Probable pectinesterase/pectinesterase inhibitor 6 (PME6).